The sequence spans 86 residues: UPF0386 protein RC1_1783 (86 aa).

This sequence belongs to the UPF0386 family.

In Rhodospirillum centenum (strain ATCC 51521 / SW), this protein is UPF0386 protein RC1_1783.